The chain runs to 320 residues: Cytochrome f (320 aa).

Residues 1 to 35 (MQNRKTFSWVKEQMTRSIYVSIMIYVITRASISNA) form the signal peptide. Heme-binding residues include Y36, C56, C59, and H60. The helical transmembrane segment at 286 to 306 (VQGLLFFLASVILAQIFLVLK) threads the bilayer.

The protein belongs to the cytochrome f family. As to quaternary structure, the 4 large subunits of the cytochrome b6-f complex are cytochrome b6, subunit IV (17 kDa polypeptide, petD), cytochrome f and the Rieske protein, while the 4 small subunits are PetG, PetL, PetM and PetN. The complex functions as a dimer. The cofactor is heme.

It is found in the plastid. It localises to the chloroplast thylakoid membrane. In terms of biological role, component of the cytochrome b6-f complex, which mediates electron transfer between photosystem II (PSII) and photosystem I (PSI), cyclic electron flow around PSI, and state transitions. The sequence is that of Cytochrome f from Phalaenopsis aphrodite subsp. formosana (Moth orchid).